Here is a 392-residue protein sequence, read N- to C-terminus: MPLPLYLLAVAVCAMGTSEFMLAGLVPDIASDLGVTVGTAGTLTSAFATGMIVGAPLVAALARTWPRRSSLLGFILAFAAAHAVGAGTTSFPVLVACRVVAALANAGFLAVALTTAAALVPADKQGRALAVLLSGTTVATVAGVPGGSLLGTWLGWRATFWAVAVCCLPAAFGVLKAIPAGRATAAATGGPPLRVELAALKTPRLLLAMLLGALVNAATFASFTFLAPVVTDTAGLGDLWISVALVLFGAGSFAGVTVAGRLSDRRPAQVLAVAGPLLLVGWPALAMLADRPVALLTLVFVQGALSFALGSTLITRVLYEAAGAPTMAGSYATAALNVGAAAGPLVAATTLGHTTGNLGPLWASGLLVAVALLVAFPFRTVITTAAPADATR.

A run of 12 helical transmembrane segments spans residues 6–26 (YLLA…AGLV), 42–62 (TLTS…AALA), 71–91 (LLGF…TTSF), 100–120 (VAAL…AALV), 129–149 (LAVL…GGSL), 160–180 (FWAV…AIPA), 205–225 (LLLA…SFTF), 239–259 (LWIS…VTVA), 268–288 (AQVL…LAML), 294–314 (ALLT…STLI), 332–352 (ATAA…TTLG), and 358–378 (LGPL…AFPF).

Belongs to the major facilitator superfamily.

It is found in the cell membrane. The protein is Chloramphenicol resistance protein (cmlR) of Streptomyces lividans.